The sequence spans 430 residues: Elongation factor 1-alpha (430 aa).

In terms of domain architecture, tr-type G spans 7-219 (KPHVNIVFIG…DQIPEPEKPV (213 aa)). Positions 16–23 (GHVDHGKS) are G1. A GTP-binding site is contributed by 16–23 (GHVDHGKS). Ser-23 contributes to the Mg(2+) binding site. Residues 70–74 (GITID) form a G2 region. A G3 region spans residues 91 to 94 (DAPG). GTP contacts are provided by residues 91–95 (DAPGH) and 146–149 (NKMD). Positions 146 to 149 (NKMD) are G4. Positions 183–185 (SAW) are G5.

This sequence belongs to the TRAFAC class translation factor GTPase superfamily. Classic translation factor GTPase family. EF-Tu/EF-1A subfamily.

The protein resides in the cytoplasm. It catalyses the reaction GTP + H2O = GDP + phosphate + H(+). In terms of biological role, GTP hydrolase that promotes the GTP-dependent binding of aminoacyl-tRNA to the A-site of ribosomes during protein biosynthesis. This chain is Elongation factor 1-alpha, found in Pyrococcus woesei.